The chain runs to 179 residues: Acireductone dioxygenase (179 aa).

His85, His87, Glu91, and His132 together coordinate Fe(2+). 4 residues coordinate Ni(2+): His85, His87, Glu91, and His132.

It belongs to the acireductone dioxygenase (ARD) family. Fe(2+) serves as cofactor. It depends on Ni(2+) as a cofactor.

It is found in the cytoplasm. The protein resides in the nucleus. It carries out the reaction 1,2-dihydroxy-5-(methylsulfanyl)pent-1-en-3-one + O2 = 4-methylsulfanyl-2-oxobutanoate + formate + 2 H(+). The catalysed reaction is 1,2-dihydroxy-5-(methylsulfanyl)pent-1-en-3-one + O2 = 3-(methylsulfanyl)propanoate + CO + formate + 2 H(+). Its pathway is amino-acid biosynthesis; L-methionine biosynthesis via salvage pathway; L-methionine from S-methyl-5-thio-alpha-D-ribose 1-phosphate: step 5/6. In terms of biological role, catalyzes 2 different reactions between oxygen and the acireductone 1,2-dihydroxy-3-keto-5-methylthiopentene (DHK-MTPene) depending upon the metal bound in the active site. Fe-containing acireductone dioxygenase (Fe-ARD) produces formate and 2-keto-4-methylthiobutyrate (KMTB), the alpha-ketoacid precursor of methionine in the methionine recycle pathway. Ni-containing acireductone dioxygenase (Ni-ARD) produces methylthiopropionate, carbon monoxide and formate, and does not lie on the methionine recycle pathway. This is Acireductone dioxygenase from Saccharomyces cerevisiae (strain ATCC 204508 / S288c) (Baker's yeast).